We begin with the raw amino-acid sequence, 334 residues long: MHPDTRSQPFAPLFDDVIVLTGPTASGKTELALRVAETLAARTNGRQEIEILSLDAIAVYRGMDIGSAKPTSDQLARAPHHLIDLVDPWDEFSVAEYLHSAHACVQDILERSKRPMFVGGTPMYLKGVLRGFDAGPPADEAFRNAVEEDLRQHGIGALRERLHQVDPLSAAKIDRGDSRRMIRALEFARATGTPISHRQLQFDTARSSHEGLVFALRVPRPVLHQRIEKRVEEMFAEGLVAEVQGLLALEQPLSKTSRQAVGYREIIEAIAAGDAPETAAERVVFHTRRLARRQETWLRSFSEIRGLGSFESDSAPDIDQCVESMVETILSFSD.

Residue 22 to 29 participates in ATP binding; the sequence is GPTASGKT. 24-29 provides a ligand contact to substrate; the sequence is TASGKT.

It belongs to the IPP transferase family. Monomer. It depends on Mg(2+) as a cofactor.

It catalyses the reaction adenosine(37) in tRNA + dimethylallyl diphosphate = N(6)-dimethylallyladenosine(37) in tRNA + diphosphate. Catalyzes the transfer of a dimethylallyl group onto the adenine at position 37 in tRNAs that read codons beginning with uridine, leading to the formation of N6-(dimethylallyl)adenosine (i(6)A). The sequence is that of tRNA dimethylallyltransferase from Rhodopirellula baltica (strain DSM 10527 / NCIMB 13988 / SH1).